Reading from the N-terminus, the 205-residue chain is Guanylate kinase (205 aa).

The Guanylate kinase-like domain occupies 5–183; that stretch reads GLLIVFSGPS…AAERVKKIIE (179 aa). 12–19 is an ATP binding site; that stretch reads GPSGVGKG.

Belongs to the guanylate kinase family.

The protein localises to the cytoplasm. It carries out the reaction GMP + ATP = GDP + ADP. Essential for recycling GMP and indirectly, cGMP. The polypeptide is Guanylate kinase (gmk) (Lactococcus lactis subsp. lactis (strain IL1403) (Streptococcus lactis)).